We begin with the raw amino-acid sequence, 577 residues long: F-box/TPR repeat protein pof3 (577 aa).

TPR repeat units follow at residues 6 to 39 (VKAI…EPNP), 41 to 74 (IDLF…NARN), and 76 to 108 (RGYL…VHKM). The 43-residue stretch at 138-180 (ILPREVLLCILQQLNFKSIVQCMQVCKHWRDCIKKEPSLFCCL) folds into the F-box domain.

In terms of assembly, a part of the E3 ubiquitin ligase Skp1-Cullin-1-F-box (SCF) complex. Interacts with cul1, mcl1 and skp1.

It is found in the mitochondrion. The protein localises to the nucleus. Its function is as follows. Has a role in substrate recognition in the Skp1-Cullin-1/Cdc53-F-box (SCF) ubiquitin ligase complex. Required for the maintenance of telomere length and transcriptional silencing at the telomere. Also required for chromosome segregation. The chain is F-box/TPR repeat protein pof3 (pof3) from Schizosaccharomyces pombe (strain 972 / ATCC 24843) (Fission yeast).